The following is a 273-amino-acid chain: Tryptophan synthase alpha chain (273 aa).

Active-site proton acceptor residues include Glu56 and Asp67.

It belongs to the TrpA family. As to quaternary structure, tetramer of two alpha and two beta chains.

The enzyme catalyses (1S,2R)-1-C-(indol-3-yl)glycerol 3-phosphate + L-serine = D-glyceraldehyde 3-phosphate + L-tryptophan + H2O. Its pathway is amino-acid biosynthesis; L-tryptophan biosynthesis; L-tryptophan from chorismate: step 5/5. Functionally, the alpha subunit is responsible for the aldol cleavage of indoleglycerol phosphate to indole and glyceraldehyde 3-phosphate. The protein is Tryptophan synthase alpha chain of Shewanella baltica (strain OS155 / ATCC BAA-1091).